We begin with the raw amino-acid sequence, 297 residues long: Bifunctional protein FolD 2 (297 aa).

NADP(+)-binding positions include 164–166, Ser193, and Ile234; that span reads GRS.

It belongs to the tetrahydrofolate dehydrogenase/cyclohydrolase family. In terms of assembly, homodimer.

The catalysed reaction is (6R)-5,10-methylene-5,6,7,8-tetrahydrofolate + NADP(+) = (6R)-5,10-methenyltetrahydrofolate + NADPH. The enzyme catalyses (6R)-5,10-methenyltetrahydrofolate + H2O = (6R)-10-formyltetrahydrofolate + H(+). The protein operates within one-carbon metabolism; tetrahydrofolate interconversion. Functionally, catalyzes the oxidation of 5,10-methylenetetrahydrofolate to 5,10-methenyltetrahydrofolate and then the hydrolysis of 5,10-methenyltetrahydrofolate to 10-formyltetrahydrofolate. This chain is Bifunctional protein FolD 2, found in Haloarcula marismortui (strain ATCC 43049 / DSM 3752 / JCM 8966 / VKM B-1809) (Halobacterium marismortui).